The following is a 423-amino-acid chain: Acaloleptin A (423 aa).

Positions 1–17 are cleaved as a signal peptide; sequence MITKISLILFAVLLVSG. A propeptide spanning residues 18 to 26 is cleaved from the precursor; it reads LEEEERWKR. Disordered stretches follow at residues 28–58, 108–128, 180–203, and 355–385; these read LQPG…NTKT, INNK…DNGN, NVNN…GNTR, and SDDE…TRAD. Residues 34–43 show a composition bias toward polar residues; the sequence is NVNNNDQPWQ. Over residues 180–189 the composition is skewed to polar residues; sequence NVNNKDQPWQ. Over residues 357 to 366 the composition is skewed to acidic residues; it reads DEDEEEEEDQ. Positions 376–385 are enriched in basic and acidic residues; the sequence is RGDDGNTRAD.

The protein belongs to the coleoptericin family. In terms of tissue distribution, hemolymph (at protein level). Larval fat body.

The protein localises to the secreted. In terms of biological role, acaloleptins A1-A4 show antibacterial activity against Gram-negative bacteria but not against Gram-positive bacteria. Acaloleptin A5 shows antibacterial activity against Gram-positive bacteria but not against Gram-negative bacteria, and may also have antifungal activity. This Acalolepta luxuriosa (Udo longhorn beetle) protein is Acaloleptin A.